The following is a 191-amino-acid chain: Phosphoheptose isomerase (191 aa).

The SIS domain maps to I37–E191. Residue N52 to G54 participates in substrate binding. 2 residues coordinate Zn(2+): H61 and E65. Residues E65, N93–D94, S119–S121, S124, and Q172 contribute to the substrate site. Zn(2+)-binding residues include Q172 and H180.

This sequence belongs to the SIS family. GmhA subfamily. In terms of assembly, homotetramer. Zn(2+) is required as a cofactor.

It is found in the cytoplasm. The catalysed reaction is 2 D-sedoheptulose 7-phosphate = D-glycero-alpha-D-manno-heptose 7-phosphate + D-glycero-beta-D-manno-heptose 7-phosphate. It participates in carbohydrate biosynthesis; D-glycero-D-manno-heptose 7-phosphate biosynthesis; D-glycero-alpha-D-manno-heptose 7-phosphate and D-glycero-beta-D-manno-heptose 7-phosphate from sedoheptulose 7-phosphate: step 1/1. It functions in the pathway bacterial outer membrane biogenesis; LPS core biosynthesis. Functionally, catalyzes the isomerization of sedoheptulose 7-phosphate in D-glycero-D-manno-heptose 7-phosphate. The protein is Phosphoheptose isomerase of Vibrio vulnificus (strain CMCP6).